We begin with the raw amino-acid sequence, 602 residues long: Alpha-glucosides permease MPH3 (602 aa).

The Cytoplasmic segment spans residues 1-106 (MKNLSFLINR…AAAWSLLVST (106 aa)). Residues 107–127 (TLIMEGYDTAILGAFYALPIF) form a helical membrane-spanning segment. The Extracellular portion of the chain corresponds to 128–142 (QRKFGSQNDKTGEWE). Residues 143-163 (ISASWQIGLTLCYMAGEIVGL) traverse the membrane as a helical segment. Residues 164-178 (QLTGPSVDLVGNRYT) are Cytoplasmic-facing. Residues 179–199 (LIIALFFLAAFTFILYFCNSL) traverse the membrane as a helical segment. A topological domain (extracellular) is located at residue glycine 200. The helical transmembrane segment at 201 to 221 (MIAVGQALCGMPWGCFQCLTV) threads the bilayer. At 222 to 234 (SYASEICPLALRY) the chain is on the cytoplasmic side. Residues 235-255 (YLTTYSNLCWLFGQLFAAGIM) traverse the membrane as a helical segment. Over 256–270 (KNSQKKYADSELGYK) the chain is Extracellular. A helical transmembrane segment spans residues 271–291 (LPFALQWILPVPLALGIFFAP). Residues 292 to 363 (ESPWWLVKKG…EDKINRRRTR (72 aa)) lie on the Cytoplasmic side of the membrane. Residues 364–384 (ITCLCWAGQATCGSILIGYST) form a helical membrane-spanning segment. At 385–397 (YFYEKAGVSTEMS) the chain is on the extracellular side. The chain crosses the membrane as a helical span at residues 398–418 (FTFSIIQYCLGICATFLSWWA). Over 419 to 426 (SKYFGRYD) the chain is Cytoplasmic. Residues 427-447 (LYAFGLAFQTIVFFIIGGLGC) traverse the membrane as a helical segment. The Extracellular segment spans residues 448 to 459 (SSTHGSKMGSGS). Residues 460–480 (LLMAVAFFYNLGIAPVVFCLV) traverse the membrane as a helical segment. Residues 481–492 (SEMPSSRLRTKT) lie on the Cytoplasmic side of the membrane. A helical transmembrane segment spans residues 493-513 (IILARNTYNVVSIICSVLILY). Over 514 to 525 (QLNSKKWNWGAK) the chain is Extracellular. A helical membrane pass occupies residues 526 to 546 (SGFFWGVLCFCTLIWAVVDLP). Residues 547-602 (ETAGKTFVEINELFKLGVSARKFKSTKVDPFVVKNTPKYVSHNDPKGDIEASIAEE) lie on the Cytoplasmic side of the membrane.

It belongs to the major facilitator superfamily. Sugar transporter (TC 2.A.1.1) family.

The protein localises to the cell membrane. Its function is as follows. High-affinity uptake of maltose and maltotriose. Also transports alpha-methylglucoside, glucose and turanose but not melezitose or trehalose. In Saccharomyces cerevisiae (strain YJM789) (Baker's yeast), this protein is Alpha-glucosides permease MPH3 (MPH3).